The chain runs to 325 residues: Tetraacyldisaccharide 4'-kinase (325 aa).

ATP is bound at residue 53–60 (SVGGNGKT).

The protein belongs to the LpxK family.

The enzyme catalyses a lipid A disaccharide + ATP = a lipid IVA + ADP + H(+). The protein operates within glycolipid biosynthesis; lipid IV(A) biosynthesis; lipid IV(A) from (3R)-3-hydroxytetradecanoyl-[acyl-carrier-protein] and UDP-N-acetyl-alpha-D-glucosamine: step 6/6. Transfers the gamma-phosphate of ATP to the 4'-position of a tetraacyldisaccharide 1-phosphate intermediate (termed DS-1-P) to form tetraacyldisaccharide 1,4'-bis-phosphate (lipid IVA). This Actinobacillus succinogenes (strain ATCC 55618 / DSM 22257 / CCUG 43843 / 130Z) protein is Tetraacyldisaccharide 4'-kinase.